The primary structure comprises 118 residues: Large ribosomal subunit protein uL24 (118 aa).

This sequence belongs to the universal ribosomal protein uL24 family. Part of the 50S ribosomal subunit.

One of two assembly initiator proteins, it binds directly to the 5'-end of the 23S rRNA, where it nucleates assembly of the 50S subunit. Its function is as follows. One of the proteins that surrounds the polypeptide exit tunnel on the outside of the subunit. This Prochlorococcus marinus (strain MIT 9313) protein is Large ribosomal subunit protein uL24.